The sequence spans 103 residues: Small ribosomal subunit protein uS10 (103 aa).

The protein belongs to the universal ribosomal protein uS10 family. Part of the 30S ribosomal subunit.

Involved in the binding of tRNA to the ribosomes. The polypeptide is Small ribosomal subunit protein uS10 (Campylobacter fetus subsp. fetus (strain 82-40)).